Consider the following 183-residue polypeptide: Dual-action ribosomal maturation protein DarP (183 aa).

Belongs to the DarP family.

It localises to the cytoplasm. Functionally, member of a network of 50S ribosomal subunit biogenesis factors which assembles along the 30S-50S interface, preventing incorrect 23S rRNA structures from forming. Promotes peptidyl transferase center (PTC) maturation. This Klebsiella pneumoniae (strain 342) protein is Dual-action ribosomal maturation protein DarP.